The chain runs to 397 residues: Anhydro-N-acetylmuramic acid kinase (397 aa).

Residue 9-16 (GTSYDAID) coordinates ATP.

It belongs to the anhydro-N-acetylmuramic acid kinase family.

The enzyme catalyses 1,6-anhydro-N-acetyl-beta-muramate + ATP + H2O = N-acetyl-D-muramate 6-phosphate + ADP + H(+). It functions in the pathway amino-sugar metabolism; 1,6-anhydro-N-acetylmuramate degradation. It participates in cell wall biogenesis; peptidoglycan recycling. Its function is as follows. Catalyzes the specific phosphorylation of 1,6-anhydro-N-acetylmuramic acid (anhMurNAc) with the simultaneous cleavage of the 1,6-anhydro ring, generating MurNAc-6-P. Is required for the utilization of anhMurNAc either imported from the medium or derived from its own cell wall murein, and thus plays a role in cell wall recycling. The protein is Anhydro-N-acetylmuramic acid kinase of Rhodococcus erythropolis (strain PR4 / NBRC 100887).